We begin with the raw amino-acid sequence, 185 residues long: Ribonuclease HII (185 aa).

Positions Met-1–Leu-185 constitute an RNase H type-2 domain. A divalent metal cation-binding residues include Asp-7, Glu-8, and Asp-99.

It belongs to the RNase HII family. It depends on Mn(2+) as a cofactor. Mg(2+) serves as cofactor.

Its subcellular location is the cytoplasm. It catalyses the reaction Endonucleolytic cleavage to 5'-phosphomonoester.. Endonuclease that specifically degrades the RNA of RNA-DNA hybrids. The protein is Ribonuclease HII of Francisella tularensis subsp. novicida (strain U112).